A 355-amino-acid polypeptide reads, in one-letter code: Methyltransferase FUS9 (355 aa).

S-adenosyl-L-homocysteine contacts are provided by Tyr-18, Asn-63, Asp-86, Ser-123, and Phe-124. Phe-231 is a Mg(2+) binding site.

Belongs to the methyltransferase superfamily. Type-7 methyltransferase family. Requires Mg(2+) as cofactor.

It functions in the pathway mycotoxin biosynthesis. In terms of biological role, methyltransferase; part of the gene cluster that mediates the biosynthesis of the mycotoxin fusarin C. Within the cluster, FUS1, FUS2, FUS8 and FUS9 are sufficient for fusarin production. The roles of the other FUS members are yet undetermined. The fusarin C synthetase FUS1 is responsible for the condensation of one acetyl-coenzyme A (CoA) unit with six malonyl-CoA units and the amide linkage of the arising heptaketide and homoserine, subsequently releasing the first intermediate, prefusarin, as an alcohol with an open ring structure. The cytochrome P450 monooxygenase FUS8 participates in multiple oxidation processes at carbon C-20 and is able to use the FUS1 product as substrate, resulting in formation of 20-hydroxy-prefusarin. This reaction seems to be essential before the 2-pyrrolidone ring closure can be catalyzed by FUS2, generating 20-hydroxy-fusarin. FUS8 is able to further oxidizes carbon C-20 after ring closure, resulting in the formation of carboxy-fusarin C. As the last step, FUS9 methylates the hydroxyl group at C-21 to generate fusarin C. Fusarin C can then rearrange to epi-fusarin C, the (z)-isomers, and fusarin A and fusarin D. This Gibberella fujikuroi (strain CBS 195.34 / IMI 58289 / NRRL A-6831) (Bakanae and foot rot disease fungus) protein is Methyltransferase FUS9.